The sequence spans 426 residues: Adenylosuccinate synthetase (426 aa).

Residues 12-18 (GDEGKGK) and 40-42 (GHT) contribute to the GTP site. Residue Asp-13 is the Proton acceptor of the active site. The Mg(2+) site is built by Asp-13 and Gly-40. IMP-binding positions include 13–16 (DEGK), 38–41 (NAGH), Thr-131, Arg-145, Gln-226, Thr-241, and Arg-305. The active-site Proton donor is the His-41. 301-307 (ATTGRKR) lines the substrate pocket. Residues Arg-307, 333–335 (KLD), and 415–417 (SVG) contribute to the GTP site.

Belongs to the adenylosuccinate synthetase family. As to quaternary structure, homodimer. It depends on Mg(2+) as a cofactor.

It is found in the cytoplasm. It catalyses the reaction IMP + L-aspartate + GTP = N(6)-(1,2-dicarboxyethyl)-AMP + GDP + phosphate + 2 H(+). The protein operates within purine metabolism; AMP biosynthesis via de novo pathway; AMP from IMP: step 1/2. In terms of biological role, plays an important role in the de novo pathway of purine nucleotide biosynthesis. Catalyzes the first committed step in the biosynthesis of AMP from IMP. The sequence is that of Adenylosuccinate synthetase from Nitratidesulfovibrio vulgaris (strain DP4) (Desulfovibrio vulgaris).